The primary structure comprises 98 residues: DNA-directed RNA polymerase subunit Rpo11 (98 aa).

The protein belongs to the archaeal Rpo11/eukaryotic RPB11/RPC19 RNA polymerase subunit family. Part of the RNA polymerase complex.

Its subcellular location is the cytoplasm. It carries out the reaction RNA(n) + a ribonucleoside 5'-triphosphate = RNA(n+1) + diphosphate. DNA-dependent RNA polymerase (RNAP) catalyzes the transcription of DNA into RNA using the four ribonucleoside triphosphates as substrates. The sequence is that of DNA-directed RNA polymerase subunit Rpo11 from Korarchaeum cryptofilum (strain OPF8).